A 267-amino-acid chain; its full sequence is Tryptophan synthase alpha chain (267 aa).

Catalysis depends on proton acceptor residues Glu47 and Asp58.

Belongs to the TrpA family. As to quaternary structure, tetramer of two alpha and two beta chains.

It catalyses the reaction (1S,2R)-1-C-(indol-3-yl)glycerol 3-phosphate + L-serine = D-glyceraldehyde 3-phosphate + L-tryptophan + H2O. It functions in the pathway amino-acid biosynthesis; L-tryptophan biosynthesis; L-tryptophan from chorismate: step 5/5. Functionally, the alpha subunit is responsible for the aldol cleavage of indoleglycerol phosphate to indole and glyceraldehyde 3-phosphate. In Chlorobium limicola (strain DSM 245 / NBRC 103803 / 6330), this protein is Tryptophan synthase alpha chain.